We begin with the raw amino-acid sequence, 347 residues long: NADH-ubiquinone oxidoreductase chain 2 (347 aa).

Transmembrane regions (helical) follow at residues I13–L33, F60–L80, L96–P116, P123–Y143, L149–G169, I178–P198, T201–L221, T247–I267, N274–L294, and L326–I346.

It belongs to the complex I subunit 2 family. In terms of assembly, core subunit of respiratory chain NADH dehydrogenase (Complex I) which is composed of 45 different subunits. Interacts with TMEM242.

It localises to the mitochondrion inner membrane. The catalysed reaction is a ubiquinone + NADH + 5 H(+)(in) = a ubiquinol + NAD(+) + 4 H(+)(out). In terms of biological role, core subunit of the mitochondrial membrane respiratory chain NADH dehydrogenase (Complex I) which catalyzes electron transfer from NADH through the respiratory chain, using ubiquinone as an electron acceptor. Essential for the catalytic activity and assembly of complex I. This is NADH-ubiquinone oxidoreductase chain 2 from Pan troglodytes (Chimpanzee).